We begin with the raw amino-acid sequence, 161 residues long: 3-isopropylmalate dehydratase small subunit (161 aa).

It belongs to the LeuD family. LeuD type 2 subfamily. Heterodimer of LeuC and LeuD.

The catalysed reaction is (2R,3S)-3-isopropylmalate = (2S)-2-isopropylmalate. The protein operates within amino-acid biosynthesis; L-leucine biosynthesis; L-leucine from 3-methyl-2-oxobutanoate: step 2/4. In terms of biological role, catalyzes the isomerization between 2-isopropylmalate and 3-isopropylmalate, via the formation of 2-isopropylmaleate. In Clostridium beijerinckii (strain ATCC 51743 / NCIMB 8052) (Clostridium acetobutylicum), this protein is 3-isopropylmalate dehydratase small subunit.